The following is a 206-amino-acid chain: 3-demethoxyubiquinol 3-hydroxylase (206 aa).

Positions 55, 85, 88, 137, 169, and 172 each coordinate Fe cation.

Belongs to the COQ7 family. It depends on Fe cation as a cofactor.

It is found in the cell membrane. It carries out the reaction a 5-methoxy-2-methyl-3-(all-trans-polyprenyl)benzene-1,4-diol + AH2 + O2 = a 3-demethylubiquinol + A + H2O. It participates in cofactor biosynthesis; ubiquinone biosynthesis. Functionally, catalyzes the hydroxylation of 2-nonaprenyl-3-methyl-6-methoxy-1,4-benzoquinol during ubiquinone biosynthesis. The chain is 3-demethoxyubiquinol 3-hydroxylase from Chromobacterium violaceum (strain ATCC 12472 / DSM 30191 / JCM 1249 / CCUG 213 / NBRC 12614 / NCIMB 9131 / NCTC 9757 / MK).